The chain runs to 1653 residues: MSDLPIEFTELVDLMSLGISPQFLDFRSTTFESDHFVTVRETKDGTNSVAIVDLAKGNEVTRKNMGGDSAIMHPSQMVISVRANGTIVQIFNLETKSKLKSFTLDEPVIFWRWLSETTLGFVTARSILTSNVFDGNVNAKPQLLTLRHANLNNTQIINFVANKNLDWFAVVGILQENGRIAGRIQLFSKQRNISQAIDGHVAIFTNILLEGNGSTPVQVFVTGNRNATTGAGELRIIEIDHDASLPSQYQKETTDIFFPPDATNDFPIAVQVSEKYGIIYLLTKYGFIHLYELETGTNLFVNRITAESVFTAAPYNHENGIACINKKGQVLAVEISTSQIVPYILNKLSNVALALIVATRGGLPGADDLFQKQFESLLLQNDYQNAAKVAASSTSLRNQNTINRLKNIQAPPGAISPILLYFSTLLDKGKLNKEETIELARPVLQQDRKQLFEKWLKEDKLECSEELGDIVKPFDTTLALACYLRAGAHAKVISCLAELQQFEKIIPYCQKVGYQPNFLVLISSLIRSSPDRASEFAVSLLQNPETASQIDIEKIADLFFSQNHIQQGTSLLLDALKGDTPDQGHLQTRVLEVNLLHAPQVADAILGNNIFSHYDKPTIASLSEKAGLYQRALENYTDIKDIKRCVVHTNALPIDWLVGYFGKLNVEQSLACLKALMDNNIQANIQTVVQVATKFSDLIGPSTLIKLFEDYNATEGLYYYLASLVNLTEDKDVVYKYIEAAAKMKQYREIERIVKDNNVYDPERVKNFLKDANLEDQLPLVIVCDRFDFVHEMILYLYKSQNLKFIETYVQQVNPSKTAQVVGALLDMDCDEAFIQSLLQSVLGQVPINELTTEVEKRNRLKILLPFLEQSLSQGIQDQAVYNALAKIYIDSNNSPEKFLKENDQYDTLDVGHYCEKRDPYLAYIAYEKGQNDDDLIRITNENSMYKYQARYLLERSDLDLWNKVLNQENIHRRQLIDSVISVGIPELTDPEPVSLTVQAFMTNGLKLELIELLEKIILEPSPFNENVALQGLLLLSAIKYEPTKVSSYIEKLDNYDADEIAPLCIEHDLKEEAFEIYDKHEMYGKALKVLIEDIMSLDRAASYADKINTPELWSQIGTAQLDGLRIPDAIESYIKAEDPSNYENVIDIAEQAGKYEELIPFLLMARKTLKEPKIDGALILAYAELNKIHEIENLLAGSNVANLDHVGDKLFENKEYKAARLCYSAVSNYSKLASTLVYLGDYQAAVDTARKASNIKVWKLVNDACIEKKEFKLAQICGLNLIVHAEELDELVERYESNGYFEELISLFEAGLGLERAHMGMFTELAILYSKYEPDKTFEHLKLFWSRINIPKVIRAVEQAHLWSELVFLYAHYDEWDNAALTLIEKSTKDLDHAYFKEVVVKVSNLEIYYKAINFYVKFHPSLLVDLLTSLTPRLDIPRTVKIFSKSDNLPLIKPFLINVLPKNNSVVNQAYHDLMIEEEDYKALQDAVDSYDKFDQLGLASRLESHKLIFFKKIGALLYRRNKKWAKSLSILKEEKLWKDAIETAAISQDPKVVEALLTYFVETGNREGFVALLYAAYNLVRIEFVLEISWMNSLEDYIKPFEISIKKEQNDSIKKITEELAKKSGSNEEHKDGQPLMLMNSAMNVQPTGF.

The tract at residues 1-483 (MSDLPIEFTE…FDTTLALACY (483 aa)) is globular terminal domain. WD40-like repeat regions lie at residues 23–66 (FLDF…KNMG), 67–107 (GDSA…LDEP), 108–152 (VIFW…ANLN), 153–198 (NTQI…QAID), 199–263 (GHVA…PDAT), 264–307 (NDFP…ITAE), and 308–336 (SVFTAAPYNHENGIACINKKGQVLAVEIS). The interval 453–469 (EKWLKEDKLECSEELGD) is binding site for the uncoating ATPase, involved in lattice disassembly. The tract at residues 484–527 (LRAGAHAKVISCLAELQQFEKIIPYCQKVGYQPNFLVLISSLIR) is flexible linker. Positions 528–1653 (SSPDRASEFA…SAMNVQPTGF (1126 aa)) are heavy chain arm. CHCR repeat units lie at residues 543-689 (NPET…QTVV), 692-834 (ATKF…DEAF), 839-978 (LQSV…QLID), 985-1130 (IPEL…IPDA), 1134-1275 (YIKA…FKLA), 1280-1426 (LNLI…SLLV), and 1429-1572 (LTSL…REGF). K1107 participates in a covalent cross-link: Glycyl lysine isopeptide (Lys-Gly) (interchain with G-Cter in ubiquitin). Residues 1219-1528 (AARLCYSAVS…LLYRRNKKWA (310 aa)) form an involved in binding clathrin light chain region.

Belongs to the clathrin heavy chain family. As to quaternary structure, clathrin triskelions, composed of 3 heavy chains and 3 light chains, are the basic subunits of the clathrin coat. Interacts with the auxilin-like clathrin uncoating factor SWA2. Interacts with INP53.

The protein localises to the cytoplasmic vesicle membrane. It is found in the membrane. It localises to the coated pit. Clathrin is the major protein of the polyhedral coat of coated pits and vesicles. In yeast, it is involved in the retention of proteins in an intracellular membrane compartment, presumably the trans-Golgi. This chain is Clathrin heavy chain (CHC1), found in Saccharomyces cerevisiae (strain ATCC 204508 / S288c) (Baker's yeast).